The sequence spans 71 residues: MSQYSQNQSSGAYPTPPVSTGPYMTPPPLGYPTSDISHATVAPVETKSKGDGFLKGCLAAMCCCCVLDACF.

The span at 1–12 (MSQYSQNQSSGA) shows a compositional bias: polar residues. The interval 1 to 31 (MSQYSQNQSSGAYPTPPVSTGPYMTPPPLGY) is disordered. Positions 14 to 30 (PTPPVSTGPYMTPPPLG) are enriched in pro residues. The chain crosses the membrane as a helical span at residues 48–64 (SKGDGFLKGCLAAMCCC).

Belongs to the CYSTM1 family. Heterodimers. Interacts with CYSTM6, CYSTM7, CYSTM12 and WIH1/CYSTM13. In terms of tissue distribution, mostly expressed in roots, stems, rosette leaves and siliques and, to a lower extent, in flowers and cauline leaves.

It localises to the cell membrane. The protein localises to the cytoplasm. In terms of biological role, involved in resistance to abiotic stress. The sequence is that of Protein CYSTEINE-RICH TRANSMEMBRANE MODULE 4 from Arabidopsis thaliana (Mouse-ear cress).